The sequence spans 1441 residues: uncharacterized protein (1441 aa).

Disordered regions lie at residues 1–95 (MGFL…EVIS), 150–204 (NGGI…QQQF), 224–289 (KPHQ…GEGE), 401–477 (HSNG…QLHQ), 529–661 (RHES…QPQQ), 680–760 (LNKD…KSQT), 776–810 (RKSSDSLNSSNSNIPITNISPGRQSQQQQQQHIQQ), 849–899 (QQQF…TQQL), 980–1118 (RGGS…DNNN), 1161–1185 (KSLKNSFNNNNNENINNNNNENENN), 1209–1321 (NIES…YRSY), 1348–1402 (GHNS…HIFF), and 1421–1441 (LKFNQQNNSNNNDDLGGSILE). The segment covering 19-38 (NDNSFDGGSSSYNNNNNNNN) has biased composition (low complexity). Polar residues predominate over residues 39–56 (QPITYTPTAIRSPNNKTM). 6 stretches are compositionally biased toward low complexity: residues 57 to 91 (SQSQTSIPTLSSSPSLNYPSSPPNNNNNNNNGNGN), 153 to 187 (ISQPTTPISSPSQPFQSVQPNLIIPTTPTTTTTTP), 227 to 283 (QQQQ…SLQN), 416 to 445 (NNNNNNNNNNNNNNGNNSNNGNINNNGINN), 555 to 564 (GNTDGVNIDN), and 572 to 635 (NNNN…TNNT). A compositionally biased stretch (polar residues) spans 636-645 (ATPSVINGDS). Composition is skewed to low complexity over residues 648 to 661 (QEQPQQSQQQQPQQ) and 680 to 700 (LNKDSNNVDNNNNNNNIDDNN). The segment covering 703–720 (SREEMENILKKSQQDSNK) has biased composition (basic and acidic residues). Over residues 729-751 (EDSNSGSPTFQDFQSSAAASNVS) the composition is skewed to polar residues. Low complexity-rich tracts occupy residues 780 to 810 (DSLNSSNSNIPITNISPGRQSQQQQQQHIQQ) and 849 to 880 (QQQFQFQQNSVSSQSLQSLNGGNNNNNSNSGS). Residues 881-892 (INGGSNSGGGGV) show a composition bias toward gly residues. Over residues 981–994 (GGSTNRTTPPFLTP) the composition is skewed to polar residues. Positions 995-1067 (NTSQTNLSSL…NKQTANNTTN (73 aa)) are enriched in low complexity. The span at 1068–1087 (DFSFDQNTDLRSSTNSLTIG) shows a compositional bias: polar residues. Low complexity predominate over residues 1088–1118 (SNSNFSSLKNSLNLENPENNNNPDKNVDNNN). Low complexity-rich tracts occupy residues 1225–1249 (DNNNSSSNNNNNNLKNSNSNNSLRN) and 1257–1291 (NISNNNNNNNNNNNNNNNNNNNNNNNNNNNNNNNE). Basic and acidic residues predominate over residues 1362–1373 (RHKDSIGDKEMD).

This is an uncharacterized protein from Dictyostelium discoideum (Social amoeba).